Reading from the N-terminus, the 549-residue chain is Polycomb group RING finger protein 3 homolog mig-32 (549 aa).

Positions 1-263 (MTRKRPALAE…EESMRQKYGQ (263 aa)) are disordered. The span at 12–29 (VSSSRSRVTRRSTTGAPS) shows a compositional bias: low complexity. Acidic residues-rich tracts occupy residues 38 to 49 (PESDADSEDDYD) and 87 to 100 (MDDDENEEKIDGEV). Residues 118–130 (KTAKLQTKKKKKK) show a composition bias toward basic residues. Residues 134–144 (PETPPTSPSPS) show a composition bias toward pro residues. The segment covering 145–156 (PSRSVSPSTTKS) has biased composition (low complexity). Over residues 205-235 (EEIKLRERAERKARRIEEAKNRPKLTIEQKL) the composition is skewed to basic and acidic residues. The stretch at 206–260 (EIKLRERAERKARRIEEAKNRPKLTIEQKLAKLRKKKERRERRKEQEKEESMRQK) forms a coiled coil. The segment covering 236-247 (AKLRKKKERRER) has biased composition (basic residues). Over residues 248–258 (RKEQEKEESMR) the composition is skewed to basic and acidic residues. The RING-type zinc-finger motif lies at 329–368 (CGICDGYIVDATTIIDCMHTFCKSCLLTYFESDNNTCPTC).

As to quaternary structure, component of a PRC1-like complex.

The protein resides in the nucleus. It localises to the nucleolus. In terms of biological role, component of a Polycomb group (PcG) multiprotein PRC1-like complex, a complex class required to maintain the transcriptionally repressive state of many genes, throughout development. Required for ubiquitination of histone H2A. Plays a role in the formation of the male-specific genital sensilla (simple sense organs) known as rays. Required for normal migration of the hermaphrodite specific neurons (HSN) and for extension of some neuronal processes. Represses vulval fates in hypodermal cells that do not normally contribute to vulval development. This chain is Polycomb group RING finger protein 3 homolog mig-32, found in Caenorhabditis elegans.